We begin with the raw amino-acid sequence, 214 residues long: Type IV major pilin protein PilE1 (214 aa).

Residues 1–7 constitute a propeptide, leader sequence; the sequence is MNTLQKG. Phenylalanine 8 is modified (N-methylphenylalanine). The chain crosses the membrane as a helical span at residues 8-28; it reads FTLIELMIVIAIVGILAAVAL. A disulfide bond links cysteine 127 and cysteine 161. Residues 182-214 are disordered; sequence AGTDAVTADTTGKDKEIDTKHLPSTCRDKSSAE. Positions 192 to 214 are enriched in basic and acidic residues; it reads TGKDKEIDTKHLPSTCRDKSSAE.

This sequence belongs to the N-Me-Phe pilin family. In terms of assembly, the pili are polar flexible filaments of about 5.4 nanometers diameter and 2.5 micrometers average length; they consist of only a single polypeptide chain arranged in a helical configuration of five subunits per turn in the assembled pilus.

The protein localises to the fimbrium. It is found in the membrane. Functionally, major component of the type IV pilus (T4P) that plays a role in cellular adherence, microcolony formation, resistance to neutrophil mediated killing, twitching motility as well as transformation. Mediates the attachment and the formation of bacterial microcolonies on host epithelial cells. Mechanistically, pili retractation induces host NF-kappa-B activation in infected cells, which is temporally associated with the formation of gonococcal microcolonies. This Neisseria gonorrhoeae protein is Type IV major pilin protein PilE1 (pilE1).